The primary structure comprises 72 residues: Translation initiation factor IF-1 (72 aa).

The S1-like domain maps to 2–72 (AKEDCIEMQG…SKGRIIFRSR (71 aa)).

It belongs to the IF-1 family. As to quaternary structure, component of the 30S ribosomal translation pre-initiation complex which assembles on the 30S ribosome in the order IF-2 and IF-3, IF-1 and N-formylmethionyl-tRNA(fMet); mRNA recruitment can occur at any time during PIC assembly.

The protein localises to the cytoplasm. One of the essential components for the initiation of protein synthesis. Stabilizes the binding of IF-2 and IF-3 on the 30S subunit to which N-formylmethionyl-tRNA(fMet) subsequently binds. Helps modulate mRNA selection, yielding the 30S pre-initiation complex (PIC). Upon addition of the 50S ribosomal subunit IF-1, IF-2 and IF-3 are released leaving the mature 70S translation initiation complex. The polypeptide is Translation initiation factor IF-1 (Haemophilus influenzae (strain ATCC 51907 / DSM 11121 / KW20 / Rd)).